The chain runs to 175 residues: Bifunctional protein PyrR (175 aa).

Residues 40-41 (TR), 102-110 (DDVLYTGRT), arginine 135, and valine 159 each bind substrate. A PRPP-binding motif is present at residues 98-110 (VIIIDDVLYTGRT).

It belongs to the purine/pyrimidine phosphoribosyltransferase family. PyrR subfamily. Homodimer and homohexamer; in equilibrium.

The enzyme catalyses UMP + diphosphate = 5-phospho-alpha-D-ribose 1-diphosphate + uracil. Its function is as follows. Regulates transcriptional attenuation of the pyrimidine nucleotide (pyr) operon by binding in a uridine-dependent manner to specific sites on pyr mRNA. This disrupts an antiterminator hairpin in the RNA and favors formation of a downstream transcription terminator, leading to a reduced expression of downstream genes. In terms of biological role, also displays a weak uracil phosphoribosyltransferase activity which is not physiologically significant. This Staphylococcus aureus (strain MSSA476) protein is Bifunctional protein PyrR.